The sequence spans 244 residues: tRNA (guanine-N(7)-)-methyltransferase (244 aa).

A disordered region spans residues 1 to 24 (MTDSHVPHPESPAVEEGEERPHRR). Residues E74, E99, D126, and D149 each coordinate S-adenosyl-L-methionine. Residue D149 is part of the active site. Residues K153, D185, and 222 to 225 (TKFE) each bind substrate.

This sequence belongs to the class I-like SAM-binding methyltransferase superfamily. TrmB family.

It carries out the reaction guanosine(46) in tRNA + S-adenosyl-L-methionine = N(7)-methylguanosine(46) in tRNA + S-adenosyl-L-homocysteine. It participates in tRNA modification; N(7)-methylguanine-tRNA biosynthesis. Functionally, catalyzes the formation of N(7)-methylguanine at position 46 (m7G46) in tRNA. This chain is tRNA (guanine-N(7)-)-methyltransferase, found in Pseudomonas savastanoi pv. phaseolicola (strain 1448A / Race 6) (Pseudomonas syringae pv. phaseolicola (strain 1448A / Race 6)).